The following is a 246-amino-acid chain: tRNA (guanine-N(1)-)-methyltransferase (246 aa).

S-adenosyl-L-methionine-binding positions include Gly112 and 131–136 (IGDYVL).

It belongs to the RNA methyltransferase TrmD family. In terms of assembly, homodimer.

The protein resides in the cytoplasm. The enzyme catalyses guanosine(37) in tRNA + S-adenosyl-L-methionine = N(1)-methylguanosine(37) in tRNA + S-adenosyl-L-homocysteine + H(+). In terms of biological role, specifically methylates guanosine-37 in various tRNAs. This is tRNA (guanine-N(1)-)-methyltransferase from Thermosipho melanesiensis (strain DSM 12029 / CIP 104789 / BI429).